The chain runs to 88 residues: Small ribosomal subunit protein uS15 (88 aa).

Belongs to the universal ribosomal protein uS15 family. As to quaternary structure, part of the 30S ribosomal subunit. Forms a bridge to the 50S subunit in the 70S ribosome, contacting the 23S rRNA.

One of the primary rRNA binding proteins, it binds directly to 16S rRNA where it helps nucleate assembly of the platform of the 30S subunit by binding and bridging several RNA helices of the 16S rRNA. In terms of biological role, forms an intersubunit bridge (bridge B4) with the 23S rRNA of the 50S subunit in the ribosome. In Francisella tularensis subsp. holarctica (strain LVS), this protein is Small ribosomal subunit protein uS15.